The following is a 438-amino-acid chain: V-type ATP synthase beta chain (438 aa).

This sequence belongs to the ATPase alpha/beta chains family.

Produces ATP from ADP in the presence of a proton gradient across the membrane. The V-type beta chain is a regulatory subunit. The protein is V-type ATP synthase beta chain (atpB) of Chlamydia trachomatis serovar D (strain ATCC VR-885 / DSM 19411 / UW-3/Cx).